The sequence spans 283 residues: Diaminopimelate epimerase (283 aa).

The substrate site is built by Asn13, Gln45, and Asn65. Cys74 serves as the catalytic Proton donor. Residues 75–76, Asn156, Asn190, and 208–209 each bind substrate; these read GN and ER. Cys217 serves as the catalytic Proton acceptor. 218–219 is a substrate binding site; sequence GS.

Belongs to the diaminopimelate epimerase family. Homodimer.

Its subcellular location is the cytoplasm. The enzyme catalyses (2S,6S)-2,6-diaminopimelate = meso-2,6-diaminopimelate. It participates in amino-acid biosynthesis; L-lysine biosynthesis via DAP pathway; DL-2,6-diaminopimelate from LL-2,6-diaminopimelate: step 1/1. Functionally, catalyzes the stereoinversion of LL-2,6-diaminopimelate (L,L-DAP) to meso-diaminopimelate (meso-DAP), a precursor of L-lysine and an essential component of the bacterial peptidoglycan. The sequence is that of Diaminopimelate epimerase from Bartonella quintana (strain Toulouse) (Rochalimaea quintana).